We begin with the raw amino-acid sequence, 105 residues long: Cell division protein FtsB (105 aa).

At 1 to 3 (MGK) the chain is on the cytoplasmic side. Residues 4–21 (LTLLLLVLLGWLQYSLWL) traverse the membrane as a helical segment. Topologically, residues 22–105 (GKNGVHDLVR…PAAPATQDNQ (84 aa)) are periplasmic. Residues 28–62 (DLVRVESDVAAQQSNNAQLKARNDQLFAEIDDLNG) adopt a coiled-coil conformation.

This sequence belongs to the FtsB family. In terms of assembly, part of a complex composed of FtsB, FtsL and FtsQ.

It is found in the cell inner membrane. In terms of biological role, essential cell division protein. May link together the upstream cell division proteins, which are predominantly cytoplasmic, with the downstream cell division proteins, which are predominantly periplasmic. This Sodalis glossinidius (strain morsitans) protein is Cell division protein FtsB.